The sequence spans 375 residues: DNA replication and repair protein RecF (375 aa).

30–37 (GENAQGKT) contributes to the ATP binding site.

This sequence belongs to the RecF family.

It is found in the cytoplasm. Functionally, the RecF protein is involved in DNA metabolism; it is required for DNA replication and normal SOS inducibility. RecF binds preferentially to single-stranded, linear DNA. It also seems to bind ATP. The sequence is that of DNA replication and repair protein RecF from Bacillus cereus (strain ZK / E33L).